The sequence spans 1014 residues: Latrophilin-like protein 1 (1014 aa).

Residues 1-27 (MRRNKTTYSLLQTILVACLLTVTPTFA) form the signal peptide. Asn-4 carries N-linked (GlcNAc...) asparagine glycosylation. Residues 28–555 (SNKPTTDESG…IDQTLLTLLT (528 aa)) are Extracellular-facing. An SUEL-type lectin domain is found at 43-134 (ICDGEAAELS…KYLEVKYNCV (92 aa)). Residues 359 to 542 (ESNVIVQPAI…AVLMDVRGHD (184 aa)) enclose the GAIN-B domain. 2 N-linked (GlcNAc...) asparagine glycosylation sites follow: Asn-473 and Asn-518. 2 disulfide bridges follow: Cys-497–Cys-524 and Cys-512–Cys-526. The interval 497–542 (CVWWNHHELKWKPSGCKLSYHNKTMTSCDCTHLTHFAVLMDVRGHD) is GPS. A helical membrane pass occupies residues 556 to 576 (YVGCIISIICLLLTFFAYLIF). At 577–584 (SRNGGDRV) the chain is on the cytoplasmic side. Residues 585–605 (FIHENLCLSLAIAEITFLAGI) traverse the membrane as a helical segment. At 606-613 (TRTEDSLQ) the chain is on the extracellular side. A helical membrane pass occupies residues 614–634 (CGIIAVALMYMFLSALTWMLL). Topologically, residues 635–653 (EGYHIHRMLTEVFPSDPRR) are cytoplasmic. A helical membrane pass occupies residues 654–674 (FTYLLVGYIPPAIITLVAYLY). At 675–692 (NSDGFGTPDHCWLSTQNN) the chain is on the extracellular side. Residues 693–713 (FIWFFAGPACFIFCANSLVLV) form a helical membrane-spanning segment. Over 714–745 (KTLCTVYQHTSGGYLPCRHDVDSGRSIRNWVK) the chain is Cytoplasmic. A helical membrane pass occupies residues 746 to 766 (GSLALASLLGVTWIFGLFWVE). The Extracellular portion of the chain corresponds to 767–770 (DSRS). The helical transmembrane segment at 771-791 (IVMAYVFTISNSLQGLFIFLF) threads the bilayer. At 792 to 1014 (HVVFAEKMRK…NKPSMYCQDL (223 aa)) the chain is on the cytoplasmic side. Disordered regions lie at residues 814 to 833 (GSSNSSPNHKRHNVQRDLMS) and 932 to 994 (YQGW…EVTP). Residues 941–952 (PEFSPPPPPLST) are compositionally biased toward pro residues. Positions 965–986 (SGRRPPSSKMSDDSAYSDGSSS) are enriched in low complexity.

This sequence belongs to the G-protein coupled receptor 2 family. LN-TM7 subfamily. In terms of assembly, monomer and homodimer. In terms of processing, autoproteolytically processed at the GPS region of the GAIN-B domain; this cleavage modulates receptor activity. Expressed in epidermal precursor cells and pharyngeal primordium. In adults expression is seen in pharyngeal muscle cells and nervous system, the nerve ring, the gonad, and the vulva.

The protein localises to the cell membrane. Its function is as follows. Has a role in the establishment of anterior-posterior polarity in tissues during embryogenesis. Required for the alignment of the mitotic spindles and division planes. May have a role in cell death events. Required for normal defection and oocyte fertilization. Involved in sperm function. Operates in pharyngeal pumping during feeding. The polypeptide is Latrophilin-like protein 1 (Caenorhabditis elegans).